The following is a 909-amino-acid chain: Protein translocase subunit SecA (909 aa).

ATP-binding positions include Q87, 105 to 109 (GEGKT), and D514. A disordered region spans residues 879–909 (TPVQGGPKVGRNDPCPCGSGKKYKHCHGKLS). 4 residues coordinate Zn(2+): C893, C895, C904, and H905. A compositionally biased stretch (basic residues) spans 899-909 (KKYKHCHGKLS).

The protein belongs to the SecA family. Monomer and homodimer. Part of the essential Sec protein translocation apparatus which comprises SecA, SecYEG and auxiliary proteins SecDF-YajC and YidC. Zn(2+) serves as cofactor.

Its subcellular location is the cell inner membrane. It is found in the cytoplasm. It carries out the reaction ATP + H2O + cellular proteinSide 1 = ADP + phosphate + cellular proteinSide 2.. Functionally, part of the Sec protein translocase complex. Interacts with the SecYEG preprotein conducting channel. Has a central role in coupling the hydrolysis of ATP to the transfer of proteins into and across the cell membrane, serving both as a receptor for the preprotein-SecB complex and as an ATP-driven molecular motor driving the stepwise translocation of polypeptide chains across the membrane. This chain is Protein translocase subunit SecA, found in Azoarcus sp. (strain BH72).